The following is a 284-amino-acid chain: Cytosolic Fe-S cluster assembly factor NUBP2 homolog (284 aa).

27–34 (GKGGVGKS) provides a ligand contact to ATP. Residues Cys200 and Cys203 each coordinate [4Fe-4S] cluster.

It belongs to the Mrp/NBP35 ATP-binding proteins family. NUBP2/CFD1 subfamily. In terms of assembly, heterotetramer of 2 NUBP1 and 2 NUBP2 chains. Requires [4Fe-4S] cluster as cofactor.

The protein resides in the cytoplasm. Functionally, component of the cytosolic iron-sulfur (Fe/S) protein assembly (CIA) machinery. Required for maturation of extramitochondrial Fe-S proteins. The NUBP1-NUBP2 heterotetramer forms a Fe-S scaffold complex, mediating the de novo assembly of an Fe-S cluster and its transfer to target apoproteins. This is Cytosolic Fe-S cluster assembly factor NUBP2 homolog from Monosiga brevicollis (Choanoflagellate).